A 218-amino-acid polypeptide reads, in one-letter code: Glutathione S-transferase Mu 7 (218 aa).

One can recognise a GST N-terminal domain in the interval Pro2 to Gly88. Residues Tyr7 to Trp8, Trp46 to Lys50, Asn59 to Leu60, and Gln72 to Ser73 contribute to the glutathione site. The region spanning Thr90–Leu208 is the GST C-terminal domain. Tyr116 provides a ligand contact to substrate.

This sequence belongs to the GST superfamily. Mu family. In terms of assembly, homodimer.

Its subcellular location is the cytoplasm. It catalyses the reaction RX + glutathione = an S-substituted glutathione + a halide anion + H(+). In terms of biological role, conjugation of reduced glutathione to a wide number of exogenous and endogenous hydrophobic electrophiles. This is Glutathione S-transferase Mu 7 from Rattus norvegicus (Rat).